The primary structure comprises 249 residues: Coproheme decarboxylase (249 aa).

Fe-coproporphyrin III-binding positions include arginine 131, 145 to 149 (YPMDK), histidine 172, and glutamine 185. Tyrosine 145 is an active-site residue.

This sequence belongs to the ChdC family. Type 1 subfamily. It depends on Fe-coproporphyrin III as a cofactor.

The catalysed reaction is Fe-coproporphyrin III + 2 H2O2 + 2 H(+) = heme b + 2 CO2 + 4 H2O. It carries out the reaction Fe-coproporphyrin III + H2O2 + H(+) = harderoheme III + CO2 + 2 H2O. It catalyses the reaction harderoheme III + H2O2 + H(+) = heme b + CO2 + 2 H2O. Its pathway is porphyrin-containing compound metabolism; protoheme biosynthesis. Its function is as follows. Involved in coproporphyrin-dependent heme b biosynthesis. Catalyzes the decarboxylation of Fe-coproporphyrin III (coproheme) to heme b (protoheme IX), the last step of the pathway. The reaction occurs in a stepwise manner with a three-propionate intermediate. The protein is Coproheme decarboxylase of Staphylococcus epidermidis (strain ATCC 12228 / FDA PCI 1200).